We begin with the raw amino-acid sequence, 464 residues long: Transcription factor EAT1 (464 aa).

A basic motif; degenerate region spans residues 261–274 (GKGKANFATERERR). The bHLH domain occupies 261–310 (GKGKANFATERERREQLNVKFRTLRMLFPNPTKNDRASIVGDAIEYIDEL). A helix-loop-helix motif region spans residues 275-310 (EQLNVKFRTLRMLFPNPTKNDRASIVGDAIEYIDEL). The segment at 338–357 (QEAAADGESSSMRPVRDDQD) is disordered.

This sequence belongs to the bHLH protein family. As to quaternary structure, interacts with TDR.

Its subcellular location is the nucleus. Transcription factor involved in the regulation of tapetum programmed cell death (PCD) and degradation during male reproductive development. Interacts with TDR and promote tapetal PCD by regulating the expression of RTS, and the two lipid-transfer proteins C4 and C6, which function in microspore development. Acts downstream from and interacts with TDR in the regulation of tapetal PCD. Regulates directly the aspartic protease AP25 and AP37 during tapetal PCD. May not target the cysteine protease CP1. This chain is Transcription factor EAT1, found in Oryza sativa subsp. japonica (Rice).